Here is a 495-residue protein sequence, read N- to C-terminus: Phage-like element PBSX protein XkdE (495 aa).

The protein belongs to the phage portal family. PBSX subfamily.

The sequence is that of Phage-like element PBSX protein XkdE (xkdE) from Bacillus subtilis (strain 168).